A 358-amino-acid chain; its full sequence is Chondroadherin (358 aa).

The first 20 residues, 1-20 (MARVLLLSLVFLAILLPALA), serve as a signal peptide directing secretion. The LRRNT domain occupies 21–50 (ACPQNCHCHGDLQHVICDKVGLQKIPKVSE). Cysteine 22 and cysteine 37 are joined by a disulfide. LRR repeat units lie at residues 51 to 72 (TTKL…SFRT), 75 to 96 (NLVS…AFRG), 99 to 120 (QLIY…AFDD), 123 to 144 (ELTY…LLSP), 147 to 168 (NLFI…AFQG), 171 to 192 (DLRW…SLDD), 195 to 216 (NLAK…ALSK), 219 to 240 (VVEE…AFQS), 244 to 265 (YLET…AFAG), and 268 to 289 (TLKH…FPFD). O-linked (GalNAc...) serine glycosylation occurs at serine 143. Residues 299 to 347 (NPWKCTCQLRGLRRWLEAKTSRPDATCSSPAKFKGQRIRDTDALRSCKS) form the LRRCT domain. Intrachain disulfides connect cysteine 303/cysteine 345 and cysteine 305/cysteine 325. Positions 321–358 (PDATCSSPAKFKGQRIRDTDALRSCKSPTKRSKKAGRH) are disordered. The segment covering 348 to 358 (PTKRSKKAGRH) has biased composition (basic residues).

This sequence belongs to the small leucine-rich proteoglycan (SLRP) family. SLRP class IV subfamily. As to quaternary structure, mostly monomeric. In terms of tissue distribution, present in femoral head and rib cartilage, as well as in tendon. Detected in bone marrow.

The protein resides in the secreted. It is found in the extracellular space. Its subcellular location is the extracellular matrix. Functionally, promotes attachment of chondrocytes, fibroblasts, and osteoblasts. This binding is mediated (at least for chondrocytes and fibroblasts) by the integrin alpha(2)beta(1). May play an important role in the regulation of chondrocyte growth and proliferation. The sequence is that of Chondroadherin (Chad) from Rattus norvegicus (Rat).